Here is a 192-residue protein sequence, read N- to C-terminus: UPF0301 protein Bcep18194_A3962 (192 aa).

The protein belongs to the UPF0301 (AlgH) family.

The chain is UPF0301 protein Bcep18194_A3962 from Burkholderia lata (strain ATCC 17760 / DSM 23089 / LMG 22485 / NCIMB 9086 / R18194 / 383).